Consider the following 336-residue polypeptide: Dihydroorotate dehydrogenase (quinone) (336 aa).

FMN-binding positions include 62-66 (AGMDK) and threonine 86. Residue lysine 66 participates in substrate binding. 111-115 (NRMGF) is a binding site for substrate. Residues asparagine 139 and asparagine 172 each coordinate FMN. A substrate-binding site is contributed by asparagine 172. The Nucleophile role is filled by serine 175. Asparagine 177 serves as a coordination point for substrate. The FMN site is built by lysine 217 and threonine 245. 246–247 (NT) contributes to the substrate binding site. FMN-binding positions include glycine 268, glycine 297, and 318–319 (YS).

It belongs to the dihydroorotate dehydrogenase family. Type 2 subfamily. In terms of assembly, monomer. FMN serves as cofactor.

The protein resides in the cell membrane. It catalyses the reaction (S)-dihydroorotate + a quinone = orotate + a quinol. The protein operates within pyrimidine metabolism; UMP biosynthesis via de novo pathway; orotate from (S)-dihydroorotate (quinone route): step 1/1. Its function is as follows. Catalyzes the conversion of dihydroorotate to orotate with quinone as electron acceptor. The protein is Dihydroorotate dehydrogenase (quinone) of Buchnera aphidicola subsp. Schizaphis graminum (strain Sg).